The primary structure comprises 256 residues: Alcohol dehydrogenase (256 aa).

12–35 (FVAGLGGIGLDTSKELVKRDLKNL) lines the NAD(+) pocket. Ser140 is a substrate binding site. Residue Tyr153 is the Proton acceptor of the active site.

It belongs to the short-chain dehydrogenases/reductases (SDR) family. Homodimer.

It carries out the reaction a primary alcohol + NAD(+) = an aldehyde + NADH + H(+). It catalyses the reaction a secondary alcohol + NAD(+) = a ketone + NADH + H(+). The protein is Alcohol dehydrogenase (Adh) of Drosophila tsacasi (Fruit fly).